Reading from the N-terminus, the 600-residue chain is Alanine--tRNA ligase (600 aa).

The Zn(2+) site is built by H463, H467, C565, and H569.

The protein belongs to the class-II aminoacyl-tRNA synthetase family. Zn(2+) is required as a cofactor.

Its subcellular location is the cytoplasm. It carries out the reaction tRNA(Ala) + L-alanine + ATP = L-alanyl-tRNA(Ala) + AMP + diphosphate. Its function is as follows. Catalyzes the attachment of alanine to tRNA(Ala) in a two-step reaction: alanine is first activated by ATP to form Ala-AMP and then transferred to the acceptor end of tRNA(Ala). Also edits incorrectly charged Ser-tRNA(Ala) and Gly-tRNA(Ala) via its editing domain. This chain is Alanine--tRNA ligase (alaS), found in Treponema denticola (strain ATCC 35405 / DSM 14222 / CIP 103919 / JCM 8153 / KCTC 15104).